The following is a 381-amino-acid chain: Testis-specific expressed protein 55 (381 aa).

Disordered stretches follow at residues M1 to H176 and T292 to R317. Basic and acidic residues-rich tracts occupy residues S8 to N24 and R65 to T103. Residues S104 to S113 show a composition bias toward polar residues. Over residues H114 to G125 the composition is skewed to basic and acidic residues. The segment covering T134–D143 has biased composition (acidic residues). Polar residues-rich tracts occupy residues S147–N163 and T292–V302. The segment covering R307 to R317 has biased composition (low complexity).

As to expression, testis-specific.

It localises to the nucleus. This is Testis-specific expressed protein 55 from Mus musculus (Mouse).